We begin with the raw amino-acid sequence, 106 residues long: Large ribosomal subunit protein bL21 (106 aa).

This sequence belongs to the bacterial ribosomal protein bL21 family. As to quaternary structure, part of the 50S ribosomal subunit. Contacts protein L20.

In terms of biological role, this protein binds to 23S rRNA in the presence of protein L20. This is Large ribosomal subunit protein bL21 from Chlamydia pneumoniae (Chlamydophila pneumoniae).